The following is a 239-amino-acid chain: Small ribosomal subunit protein uS2 (239 aa).

Belongs to the universal ribosomal protein uS2 family.

This chain is Small ribosomal subunit protein uS2, found in Prochlorococcus marinus (strain MIT 9313).